The chain runs to 339 residues: Uricase (339 aa).

Residues lysine 33 and threonine 78 each act as charge relay system in the active site. Residues threonine 78, aspartate 79, phenylalanine 201, arginine 218, valine 266, glutamine 267, and asparagine 293 each coordinate urate. Histidine 295 (charge relay system) is an active-site residue. The short motif at 337–339 is the Microbody targeting signal element; the sequence is SHL.

This sequence belongs to the uricase family.

It localises to the peroxisome. The enzyme catalyses urate + O2 + H2O = 5-hydroxyisourate + H2O2. It functions in the pathway purine metabolism; urate degradation; (S)-allantoin from urate: step 1/3. In terms of biological role, catalyzes the oxidation of uric acid to 5-hydroxyisourate, which is further processed to form (S)-allantoin. This is Uricase (Uro) from Drosophila subobscura (Fruit fly).